The chain runs to 194 residues: Lysozyme g (194 aa).

Residues E71 and D84 contribute to the active site.

Belongs to the glycosyl hydrolase 23 family. In terms of tissue distribution, expressed in intestine, liver, spleen, anterior kidney, posterior kidney, heart, gill, muscle and leukocytes.

It catalyses the reaction Hydrolysis of (1-&gt;4)-beta-linkages between N-acetylmuramic acid and N-acetyl-D-glucosamine residues in a peptidoglycan and between N-acetyl-D-glucosamine residues in chitodextrins.. In terms of biological role, has lytic activity against M.lysodeikticus, V.alginolyticus from Epinephelus fario, V.vulnificus from culture water, A.hydrophila from soft-shell turtle, A.hydrophila from goldfish and V.parahaemolyticus, P.fluorescens and V.fluvialis from culture water. The sequence is that of Lysozyme g from Epinephelus coioides (Orange-spotted grouper).